The sequence spans 139 residues: Two-component response regulator 24 (139 aa).

In terms of domain architecture, Response regulatory spans 19–134 (TALVVDDSFV…KLLSILHKLN (116 aa)). Asp69 carries the 4-aspartylphosphate modification.

It belongs to the ARR family. Type-A subfamily. Two-component system major event consists of a His-to-Asp phosphorelay between a sensor histidine kinase (HK) and a response regulator (RR). In plants, the His-to-Asp phosphorelay involves an additional intermediate named Histidine-containing phosphotransfer protein (HPt). This multistep phosphorelay consists of a His-Asp-His-Asp sequential transfer of a phosphate group between first a His and an Asp of the HK protein, followed by the transfer to a conserved His of the HPt protein and finally the transfer to an Asp in the receiver domain of the RR protein. As to expression, mostly expressed in flowers and siliques, primarily restricted to pollen grains.

The protein localises to the nucleus. In terms of biological role, functions as a response regulator involved in His-to-Asp phosphorelay signal transduction system. Phosphorylation of the Asp residue in the receiver domain activates the ability of the protein to promote the transcription of target genes. Type-A response regulators seem to act as negative regulators of the cytokinin signaling. The polypeptide is Two-component response regulator 24 (Arabidopsis thaliana (Mouse-ear cress)).